The following is a 424-amino-acid chain: Glutamyl-tRNA reductase (424 aa).

Substrate contacts are provided by residues 51–54, S99, 104–106, and Q110; these read TCNR and EDQ. Residue C52 is the Nucleophile of the active site. Position 179 to 184 (179 to 184) interacts with NADP(+); sequence GTGEMG.

The protein belongs to the glutamyl-tRNA reductase family. In terms of assembly, homodimer.

It catalyses the reaction (S)-4-amino-5-oxopentanoate + tRNA(Glu) + NADP(+) = L-glutamyl-tRNA(Glu) + NADPH + H(+). It participates in porphyrin-containing compound metabolism; protoporphyrin-IX biosynthesis; 5-aminolevulinate from L-glutamyl-tRNA(Glu): step 1/2. In terms of biological role, catalyzes the NADPH-dependent reduction of glutamyl-tRNA(Glu) to glutamate 1-semialdehyde (GSA). In Methanospirillum hungatei JF-1 (strain ATCC 27890 / DSM 864 / NBRC 100397 / JF-1), this protein is Glutamyl-tRNA reductase.